A 390-amino-acid polypeptide reads, in one-letter code: Phosphopentomutase (390 aa).

Mn(2+) is bound by residues Asp10, Asp282, His287, Asp323, His324, and His335.

Belongs to the phosphopentomutase family. The cofactor is Mn(2+).

It is found in the cytoplasm. The catalysed reaction is 2-deoxy-alpha-D-ribose 1-phosphate = 2-deoxy-D-ribose 5-phosphate. The enzyme catalyses alpha-D-ribose 1-phosphate = D-ribose 5-phosphate. It participates in carbohydrate degradation; 2-deoxy-D-ribose 1-phosphate degradation; D-glyceraldehyde 3-phosphate and acetaldehyde from 2-deoxy-alpha-D-ribose 1-phosphate: step 1/2. In terms of biological role, isomerase that catalyzes the conversion of deoxy-ribose 1-phosphate (dRib-1-P) and ribose 1-phosphate (Rib-1-P) to deoxy-ribose 5-phosphate (dRib-5-P) and ribose 5-phosphate (Rib-5-P), respectively. The protein is Phosphopentomutase of Lachnoclostridium phytofermentans (strain ATCC 700394 / DSM 18823 / ISDg) (Clostridium phytofermentans).